A 107-amino-acid polypeptide reads, in one-letter code: Snaclec VP12 subunit A (107 aa).

2 cysteine pairs are disulfide-bonded: cysteine 4/cysteine 15 and cysteine 32/cysteine 107. In terms of domain architecture, C-type lectin spans 11–107; sequence YEGNCYKAFD…ECGLAYPFIC (97 aa).

Belongs to the snaclec family. As to quaternary structure, heterodimer of subunits alpha and beta; disulfide-linked. As to expression, expressed by the venom gland.

The protein localises to the secreted. Inhibits integrin alpha-2/beta-1- (ITGA2/ITGB1) dependent melanoma metastasis. The protein is Snaclec VP12 subunit A of Daboia palaestinae (Palestine viper).